Here is an 893-residue protein sequence, read N- to C-terminus: Probable ion channel CASTOR (893 aa).

The tract at residues 1 to 94 (MPLDPDSSPA…APRRRDPRYA (94 aa)) is disordered. Residues 65 to 85 (PLPPPEQQKQQQPPPTTPPPA) are compositionally biased toward pro residues. A helical transmembrane segment spans residues 132 to 152 (TLRWSGMVSVAAIVLCFSSLV). A coiled-coil region spans residues 156–178 (SSLHDQVHHLKAQLAEATTKLQS). Helical transmembrane passes span 210–230 (LLLS…MDLF), 266–286 (LVLL…LYGV), and 318–338 (LVSV…LGLV). RCK N-terminal domains follow at residues 359–500 (QSHT…ETVV) and 619–792 (PERI…DYVL). The stretch at 389–415 (TIVVMAEKDKEEMEADIAKMEFDLKGT) forms a coiled coil.

This sequence belongs to the castor/pollux (TC 1.A.1.23) family. Expressed in roots, leaves, stems and panicles.

Its subcellular location is the nucleus membrane. In terms of biological role, required for mycorrhizal symbiosis. The polypeptide is Probable ion channel CASTOR (Oryza sativa subsp. japonica (Rice)).